We begin with the raw amino-acid sequence, 190 residues long: Large ribosomal subunit protein uL10 (190 aa).

Positions 170–190 (AAGAPAEAAPVEAPAAETVDA) are disordered.

Belongs to the universal ribosomal protein uL10 family. Part of the ribosomal stalk of the 50S ribosomal subunit. The N-terminus interacts with L11 and the large rRNA to form the base of the stalk. The C-terminus forms an elongated spine to which L12 dimers bind in a sequential fashion forming a multimeric L10(L12)X complex.

Functionally, forms part of the ribosomal stalk, playing a central role in the interaction of the ribosome with GTP-bound translation factors. The chain is Large ribosomal subunit protein uL10 from Kineococcus radiotolerans (strain ATCC BAA-149 / DSM 14245 / SRS30216).